The sequence spans 344 residues: Inositol 2-dehydrogenase/D-chiro-inositol 3-dehydrogenase (344 aa).

It belongs to the Gfo/Idh/MocA family. In terms of assembly, homotetramer.

The enzyme catalyses myo-inositol + NAD(+) = scyllo-inosose + NADH + H(+). It catalyses the reaction 1D-chiro-inositol + NAD(+) = scyllo-inosine + NADH + H(+). It functions in the pathway polyol metabolism; myo-inositol degradation into acetyl-CoA; acetyl-CoA from myo-inositol: step 1/7. Involved in the oxidation of myo-inositol (MI) and D-chiro-inositol (DCI) to 2-keto-myo-inositol (2KMI or 2-inosose) and 1-keto-D-chiro-inositol (1KDCI), respectively. Can also use D-glucose and D-xylose, and shows a trace of activity with D-ribose and D-fructose. The polypeptide is Inositol 2-dehydrogenase/D-chiro-inositol 3-dehydrogenase (iolG) (Bacillus subtilis (strain 168)).